The following is a 1307-amino-acid chain: Rab3 GTPase-activating protein regulatory subunit (1307 aa).

It belongs to the Rab3-GAP regulatory subunit family. The Rab3 GTPase-activating complex is a heterodimer composed of rbg-1 and rbg-2.

It is found in the cytoplasm. Probable regulatory subunit of a GTPase activating protein that has specificity for Rab3 subfamily. Rab3 proteins are involved in regulated exocytosis of neurotransmitters and hormones. Rab3 GTPase-activating complex specifically converts active Rab3-GTP to the inactive form Rab3-GDP. This chain is Rab3 GTPase-activating protein regulatory subunit (rbg-2), found in Caenorhabditis elegans.